A 693-amino-acid polypeptide reads, in one-letter code: Putative adenosylcobalamin-dependent ribonucleoside-triphosphate reductase (693 aa).

Cysteines 90 and 386 form a disulfide. Active-site residues include Cys-375 and Glu-377.

Belongs to the class II ribonucleoside-triphosphate reductase family. Adenosylcob(III)alamin is required as a cofactor.

It catalyses the reaction a 2'-deoxyribonucleoside 5'-triphosphate + [thioredoxin]-disulfide + H2O = a ribonucleoside 5'-triphosphate + [thioredoxin]-dithiol. This Mycobacterium phage D29 (Mycobacteriophage D29) protein is Putative adenosylcobalamin-dependent ribonucleoside-triphosphate reductase (50).